Reading from the N-terminus, the 239-residue chain is Purine nucleoside phosphorylase DeoD-type (239 aa).

His5 serves as a coordination point for a purine D-ribonucleoside. Phosphate contacts are provided by residues Gly21, Arg25, Arg44, and Arg88–Ser91. A purine D-ribonucleoside is bound by residues Glu180 to Glu182 and Ser204 to Asp205. The active-site Proton donor is Asp205.

Belongs to the PNP/UDP phosphorylase family. In terms of assembly, homohexamer; trimer of homodimers.

The catalysed reaction is a purine D-ribonucleoside + phosphate = a purine nucleobase + alpha-D-ribose 1-phosphate. It carries out the reaction a purine 2'-deoxy-D-ribonucleoside + phosphate = a purine nucleobase + 2-deoxy-alpha-D-ribose 1-phosphate. Catalyzes the reversible phosphorolytic breakdown of the N-glycosidic bond in the beta-(deoxy)ribonucleoside molecules, with the formation of the corresponding free purine bases and pentose-1-phosphate. This chain is Purine nucleoside phosphorylase DeoD-type, found in Salmonella choleraesuis (strain SC-B67).